Reading from the N-terminus, the 160-residue chain is Ribosome maturation factor RimP (160 aa).

The protein belongs to the RimP family.

It localises to the cytoplasm. In terms of biological role, required for maturation of 30S ribosomal subunits. This is Ribosome maturation factor RimP from Orientia tsutsugamushi (strain Ikeda) (Rickettsia tsutsugamushi).